The sequence spans 83 residues: Cytochrome b559 subunit alpha (83 aa).

The chain crosses the membrane as a helical span at residues 21–35 (VIHSITIPSLFIAGW). Position 23 (His-23) interacts with heme.

Belongs to the PsbE/PsbF family. Heterodimer of an alpha subunit and a beta subunit. PSII is composed of 1 copy each of membrane proteins PsbA, PsbB, PsbC, PsbD, PsbE, PsbF, PsbH, PsbI, PsbJ, PsbK, PsbL, PsbM, PsbT, PsbX, PsbY, PsbZ, Psb30/Ycf12, at least 3 peripheral proteins of the oxygen-evolving complex and a large number of cofactors. It forms dimeric complexes. Requires heme b as cofactor.

Its subcellular location is the plastid. The protein localises to the chloroplast thylakoid membrane. In terms of biological role, this b-type cytochrome is tightly associated with the reaction center of photosystem II (PSII). PSII is a light-driven water:plastoquinone oxidoreductase that uses light energy to abstract electrons from H(2)O, generating O(2) and a proton gradient subsequently used for ATP formation. It consists of a core antenna complex that captures photons, and an electron transfer chain that converts photonic excitation into a charge separation. This Adiantum capillus-veneris (Maidenhair fern) protein is Cytochrome b559 subunit alpha.